We begin with the raw amino-acid sequence, 239 residues long: Ribonuclease HII (239 aa).

An RNase H type-2 domain is found at 30 to 221 (GPVAGVDEVG…VRRVATRSNG (192 aa)). A divalent metal cation is bound by residues Asp-36, Glu-37, and Asp-130. The segment at 219–239 (SNGAAAAEREADPPQERDGTG) is disordered. Positions 225–239 (AEREADPPQERDGTG) are enriched in basic and acidic residues.

It belongs to the RNase HII family. The cofactor is Mn(2+). Mg(2+) is required as a cofactor.

It localises to the cytoplasm. It catalyses the reaction Endonucleolytic cleavage to 5'-phosphomonoester.. Its function is as follows. Endonuclease that specifically degrades the RNA of RNA-DNA hybrids. This chain is Ribonuclease HII, found in Mycobacterium marinum (strain ATCC BAA-535 / M).